The primary structure comprises 451 residues: MEKLLGYRDLNMTPREIVEELDRHIIGQKHAKRAVANALRSRWRRKQVAEPLRSEITPKNILMIGPTGVGKTEIARRLAKLAEAPFIKVEATKFTEVGYVGRDVDSIIRDLVETSIKLEKNRAKERVKSKAREAALERVLDVLVPRKKQTAWTGEEEIDPARKMYRERILREEMNDTVIEIETNQSMSANVEIMTPPGMEEMSSQLSEMFKSFGREKKTKRKMTIAKALIQLAEEEAEALVSHEEIKSAAIDNAEQNGIVFIDEIDKVARRSDVGGADVSREGVQRDLLPLVEGCTISTKYGMIKTDHILFIASGAFHLAKPSDLIPELQGRLPVRVELDALTADDFKRILTEPDASLIKQYTALFATEQLHLEFTEDGINKIAEIAYHVNKTTENIGARRLHTLIERLTDSLSFDAADRRDGDRVIIDAAYVEKTLGEISNNEDLSRFIL.

ATP-binding positions include I26, G68–E73, D263, E328, and R400.

Belongs to the ClpX chaperone family. HslU subfamily. A double ring-shaped homohexamer of HslV is capped on each side by a ring-shaped HslU homohexamer. The assembly of the HslU/HslV complex is dependent on binding of ATP.

Its subcellular location is the cytoplasm. Its function is as follows. ATPase subunit of a proteasome-like degradation complex; this subunit has chaperone activity. The binding of ATP and its subsequent hydrolysis by HslU are essential for unfolding of protein substrates subsequently hydrolyzed by HslV. HslU recognizes the N-terminal part of its protein substrates and unfolds these before they are guided to HslV for hydrolysis. In Dichelobacter nodosus (strain VCS1703A), this protein is ATP-dependent protease ATPase subunit HslU.